Here is a 393-residue protein sequence, read N- to C-terminus: MKILVINAGSSSIKFALFEKENLNQIASGIAERIGIENGIISISFDKKYQFEIDMKDHLEAAKKLLELFEQISLIKNADEIELIGFRVVHGGIELNKASKLDQETISIIEKSAKYAPLHNPGALQAIKAFQLALPKAKLSVNLDTAFHSSIDKINYSYPINYELAQKLGIRKFGFHGISHRFITNKLEKILNKKSVNFVNLHIGNGASLCAVKVSKSIDTSMGFTPLAGIMMGTRSGDIDPSIHEFVCKEENMSIEEFTSILNKQSGISGVSQISSDLRDVEEQYAKGNAQAIFALDLYSQKIADYAAIYLNKIAPQIDAIVFTAGVGENSAFVRKNVISRIKIKNIELDEALNSQKVGEYQLISTKNSEIPVYVIRTNEELMIASDAKKLNS.

Asparagine 7 is a Mg(2+) binding site. Residue lysine 14 coordinates ATP. Arginine 87 contributes to the substrate binding site. The active-site Proton donor/acceptor is the aspartate 144. ATP is bound by residues 202–206, 277–279, and 326–330; these read HIGNG, DLR, and GVGEN. Position 380 (glutamate 380) interacts with Mg(2+).

It belongs to the acetokinase family. Homodimer. Requires Mg(2+) as cofactor. Mn(2+) is required as a cofactor.

It localises to the cytoplasm. The catalysed reaction is acetate + ATP = acetyl phosphate + ADP. Its pathway is metabolic intermediate biosynthesis; acetyl-CoA biosynthesis; acetyl-CoA from acetate: step 1/2. Catalyzes the formation of acetyl phosphate from acetate and ATP. Can also catalyze the reverse reaction. This Mycoplasmopsis pulmonis (strain UAB CTIP) (Mycoplasma pulmonis) protein is Acetate kinase.